Consider the following 122-residue polypeptide: Large ribosomal subunit protein uL14 (122 aa).

The protein belongs to the universal ribosomal protein uL14 family. Part of the 50S ribosomal subunit. Forms a cluster with proteins L3 and L19. In the 70S ribosome, L14 and L19 interact and together make contacts with the 16S rRNA in bridges B5 and B8.

Binds to 23S rRNA. Forms part of two intersubunit bridges in the 70S ribosome. The sequence is that of Large ribosomal subunit protein uL14 from Helicobacter acinonychis (strain Sheeba).